We begin with the raw amino-acid sequence, 102 residues long: Small ribosomal subunit protein uS10 (102 aa).

Belongs to the universal ribosomal protein uS10 family. As to quaternary structure, part of the 30S ribosomal subunit.

Functionally, involved in the binding of tRNA to the ribosomes. The chain is Small ribosomal subunit protein uS10 from Bacillus thuringiensis (strain Al Hakam).